Here is a 210-residue protein sequence, read N- to C-terminus: Tetraspanin-31 (210 aa).

Topologically, residues 1–12 (MVCGGFACSKNA) are cytoplasmic. Residues 13 to 33 (LCALNVVYMLVSLLLIGVAAW) traverse the membrane as a helical segment. Topologically, residues 34 to 44 (GKGLGLVSSIH) are extracellular. The helical transmembrane segment at 45–65 (IIGGVIAVGVFLLLIAVAGLV) threads the bilayer. Residues 66 to 72 (GAVNHHQ) lie on the Cytoplasmic side of the membrane. A helical transmembrane segment spans residues 73–93 (VLLFFYMIILGLVFIFQFVIS). The Extracellular segment spans residues 94 to 173 (CSCLAINRSK…FLKHSDEALK (80 aa)). 4 N-linked (GlcNAc...) asparagine glycosylation sites follow: N100, N109, N117, and N134. The helical transmembrane segment at 174–194 (ILGGVGLFFSFTEILGVWLAM) threads the bilayer. Residues 195–210 (RFRNQKDPRANPSAFL) lie on the Cytoplasmic side of the membrane.

Belongs to the tetraspanin (TM4SF) family.

It localises to the membrane. The chain is Tetraspanin-31 (TSPAN31) from Homo sapiens (Human).